The chain runs to 932 residues: RNA-binding protein 12 (932 aa).

The interval 97 to 116 is disordered; sequence IPPANASRSGPPPSSGMSGR. A compositionally biased stretch (low complexity) spans 98 to 116; it reads PPANASRSGPPPSSGMSGR. The RRM 1 domain occupies 304 to 379; sequence LYVSVHGMPF…RYVEVSPATE (76 aa). Phosphoserine is present on residues Ser-352 and Ser-375. 2 stretches are compositionally biased toward polar residues: residues 392-401 and 408-417; these read KQNMGPSGQT and LPRSKSPSGQ. Residues 392–424 are disordered; that stretch reads KQNMGPSGQTHPPPQTLPRSKSPSGQKRSRSRS. Ser-420, Ser-422, and Ser-424 each carry phosphoserine. Residues 430–507 enclose the RRM 2 domain; sequence FCVYLKGLPF…RFIQVHPITK (78 aa). Ser-525 is subject to Phosphoserine. A compositionally biased stretch (low complexity) spans 717–734; it reads NGPPFNFPGNFGGSNAFG. A disordered region spans residues 717–855; that stretch reads NGPPFNFPGN…PGFASSSGKP (139 aa). Residues 783–811 are compositionally biased toward gly residues; that stretch reads SGFGGGPQNFGNGPGSLGGPPGFGSGPPG. Residues 824 to 838 show a composition bias toward pro residues; that stretch reads AFGPGPGPGPGPGPG. An RRM 3 domain is found at 856–932; the sequence is GPTVIKVQNM…PIGSRKVNLY (77 aa).

It is found in the nucleus. The sequence is that of RNA-binding protein 12 (RBM12) from Pongo abelii (Sumatran orangutan).